Reading from the N-terminus, the 261-residue chain is Protein OSB1, mitochondrial (261 aa).

The N-terminal 28 residues, 1–28 (MNTFFKLGSLIQRTASQISSSFPKSRFF), are a transit peptide targeting the mitochondrion. The SSB domain maps to 55-155 (VNSVSLMGFV…VKVAEVNYVA (101 aa)). The PDF region stretch occupies residues 189-238 (WQVFFSNPYDWWDNRRNKKNPKQPDFKHKDTGEALWLCSDLPDWITRRLE).

As to expression, expressed in root elongation zone and in gametophytic cells.

The protein localises to the mitochondrion. Regulates mitochondrial DNA recombination. Represses homologous recombination, preventing mitochondrial genome instability and unbalanced transmission of alternative mtDNA configurations. Binds preferentially single-stranded DNA. Does not bind to RNA. The protein is Protein OSB1, mitochondrial (OSB1) of Arabidopsis thaliana (Mouse-ear cress).